Reading from the N-terminus, the 315-residue chain is Methionyl-tRNA formyltransferase (315 aa).

(6S)-5,6,7,8-tetrahydrofolate is bound at residue 113–116; it reads SLLP.

Belongs to the Fmt family.

The catalysed reaction is L-methionyl-tRNA(fMet) + (6R)-10-formyltetrahydrofolate = N-formyl-L-methionyl-tRNA(fMet) + (6S)-5,6,7,8-tetrahydrofolate + H(+). Functionally, attaches a formyl group to the free amino group of methionyl-tRNA(fMet). The formyl group appears to play a dual role in the initiator identity of N-formylmethionyl-tRNA by promoting its recognition by IF2 and preventing the misappropriation of this tRNA by the elongation apparatus. The sequence is that of Methionyl-tRNA formyltransferase from Shigella boydii serotype 18 (strain CDC 3083-94 / BS512).